Here is a 364-residue protein sequence, read N- to C-terminus: uncharacterized protein (364 aa).

The span at 1–17 (MEPGELMEVDTSQELDE) shows a compositional bias: acidic residues. Positions 1–61 (MEPGELMEVD…EEDQSSTETM (61 aa)) are disordered. The span at 19–31 (TSAKETDQPKDAQ) shows a compositional bias: basic and acidic residues.

This is an uncharacterized protein from Caenorhabditis elegans.